A 293-amino-acid polypeptide reads, in one-letter code: Insulin-like growth factor-binding protein 3 (293 aa).

The N-terminal stretch at 1 to 27 (MQRARPALWAAALIALALLRGPPAARA) is a signal peptide. The region spanning 36-119 (PVVRCEPCDA…LDGRGICANA (84 aa)) is the IGFBP N-terminal domain. Cystine bridges form between Cys-40–Cys-69, Cys-43–Cys-71, Cys-51–Cys-72, Cys-60–Cys-75, Cys-83–Cys-96, and Cys-90–Cys-116. N-linked (GlcNAc...) asparagine glycans are attached at residues Asn-118 and Asn-138. Disordered regions lie at residues 132–166 (APPAPGNGSESEEDRSVDSMENQALPSTHRVPDSK) and 178–213 (KKGHAKDSQRYKVDYESQSTDTQNFSSESKRETEYG). Ser-150 carries the phosphoserine modification. The span at 178–192 (KKGHAKDSQRYKVDY) shows a compositional bias: basic and acidic residues. The segment covering 193-204 (ESQSTDTQNFSS) has biased composition (polar residues). Asn-201 is a glycosylation site (N-linked (GlcNAc...) asparagine). A Phosphoserine modification is found at Ser-203. Residues 212-287 (YGPCRREMED…DVKGKGDVHC (76 aa)) enclose the Thyroglobulin type-1 domain. Intrachain disulfides connect Cys-215–Cys-242, Cys-253–Cys-264, and Cys-266–Cys-287.

Interacts with XLKD1. Binds IGF2 more than IGF1. Forms a ternary complex of about 140 to 150 kDa with IGF1 or IGF2 and a 85 kDa glycoprotein (ALS). Interacts with humanin; humanin competes with importin KPNB1 for binding to IGFBP3, blocking IGFBP3 nuclear import and IGFBP3-mediated apoptosis. Interacts with TMEM219. Interacts with RXRA; this interaction modulates the transcriptional activity of RXRA. Interacts with LRP1; this interaction mediates cell growth inhibition independent of IGF1. Phosphorylated by FAM20C in the extracellular medium. Phosphorylated by CK2; resulting in decreased nuclear localization.

It localises to the secreted. Its subcellular location is the nucleus. Its function is as follows. Multifunctional protein that plays a critical role in regulating the availability of IGFs such as IGF1 and IGF2 to their receptors and thereby regulates IGF-mediated cellular processes including proliferation, differentiation, and apoptosis in a cell-type specific manner. Also exhibits IGF-independent antiproliferative and apoptotic effects mediated by its receptor TMEM219/IGFBP-3R. Inhibits the positive effect of humanin on insulin sensitivity. Promotes testicular germ cell apoptosis. Acts via LRP-1/alpha2M receptor, also known as TGF-beta type V receptor, to mediate cell growth inhibition independent of IGF1. Mechanistically, induces serine-specific dephosphorylation of IRS1 or IRS2 upon ligation to its receptor, leading to the inhibitory cascade. In the nucleus, interacts with transcription factors such as retinoid X receptor-alpha/RXRA to regulate transcriptional signaling and apoptosis. The chain is Insulin-like growth factor-binding protein 3 (IGFBP3) from Sus scrofa (Pig).